Consider the following 156-residue polypeptide: Probable cyclic pyranopterin monophosphate synthase (156 aa).

Substrate contacts are provided by residues 73–75 (MCH) and 109–110 (ME). The active site involves Asp124.

This sequence belongs to the MoaC family. As to quaternary structure, homohexamer; trimer of dimers.

It carries out the reaction (8S)-3',8-cyclo-7,8-dihydroguanosine 5'-triphosphate = cyclic pyranopterin phosphate + diphosphate. It participates in cofactor biosynthesis; molybdopterin biosynthesis. Catalyzes the conversion of (8S)-3',8-cyclo-7,8-dihydroguanosine 5'-triphosphate to cyclic pyranopterin monophosphate (cPMP). The protein is Probable cyclic pyranopterin monophosphate synthase of Archaeoglobus fulgidus (strain ATCC 49558 / DSM 4304 / JCM 9628 / NBRC 100126 / VC-16).